An 883-amino-acid chain; its full sequence is Valine--tRNA ligase (883 aa).

The 'HIGH' region signature appears at 46 to 56 (PNVTGKLHLGH). The short motif at 520-524 (KMSKS) is the 'KMSKS' region element. K523 lines the ATP pocket. A coiled-coil region spans residues 809 to 844 (LVDLLNVEEELARLEKELAKWQKELDMVGKKLSNER).

This sequence belongs to the class-I aminoacyl-tRNA synthetase family. ValS type 1 subfamily. Monomer.

The protein localises to the cytoplasm. The catalysed reaction is tRNA(Val) + L-valine + ATP = L-valyl-tRNA(Val) + AMP + diphosphate. In terms of biological role, catalyzes the attachment of valine to tRNA(Val). As ValRS can inadvertently accommodate and process structurally similar amino acids such as threonine, to avoid such errors, it has a 'posttransfer' editing activity that hydrolyzes mischarged Thr-tRNA(Val) in a tRNA-dependent manner. This chain is Valine--tRNA ligase, found in Streptococcus pneumoniae (strain ATCC BAA-255 / R6).